Here is a 402-residue protein sequence, read N- to C-terminus: Acyl-[acyl-carrier-protein] desaturase 3, chloroplastic (402 aa).

The N-terminal 32 residues, 1 to 32 (MSLTGCLPPRPPCSMRRRTSGGGASVSPVVAM), are a transit peptide targeting the chloroplast. The segment at 1–66 (MSLTGCLPPR…EVPPQVTHTL (66 aa)) is disordered. Fe cation-binding residues include Glu139, Glu178, His181, Glu231, Glu264, and His267.

The protein belongs to the fatty acid desaturase type 2 family. In terms of assembly, homodimer. Fe(2+) serves as cofactor.

The protein resides in the plastid. It localises to the chloroplast. It functions in the pathway lipid metabolism; fatty acid metabolism. Introduces a cis double bond in the acyl chain of an acyl-[acyl-carrier protein]. This Oryza sativa subsp. japonica (Rice) protein is Acyl-[acyl-carrier-protein] desaturase 3, chloroplastic.